Consider the following 631-residue polypeptide: 1-deoxy-D-xylulose-5-phosphate synthase (631 aa).

Residues histidine 87 and 128-130 (GHS) each bind thiamine diphosphate. Aspartate 159 is a binding site for Mg(2+). Thiamine diphosphate-binding positions include 160 to 161 (GA), asparagine 188, phenylalanine 295, and glutamate 377. Asparagine 188 provides a ligand contact to Mg(2+).

Belongs to the transketolase family. DXPS subfamily. In terms of assembly, homodimer. The cofactor is Mg(2+). Thiamine diphosphate is required as a cofactor.

The enzyme catalyses D-glyceraldehyde 3-phosphate + pyruvate + H(+) = 1-deoxy-D-xylulose 5-phosphate + CO2. The protein operates within metabolic intermediate biosynthesis; 1-deoxy-D-xylulose 5-phosphate biosynthesis; 1-deoxy-D-xylulose 5-phosphate from D-glyceraldehyde 3-phosphate and pyruvate: step 1/1. Functionally, catalyzes the acyloin condensation reaction between C atoms 2 and 3 of pyruvate and glyceraldehyde 3-phosphate to yield 1-deoxy-D-xylulose-5-phosphate (DXP). This chain is 1-deoxy-D-xylulose-5-phosphate synthase, found in Pseudomonas putida (strain ATCC 700007 / DSM 6899 / JCM 31910 / BCRC 17059 / LMG 24140 / F1).